Reading from the N-terminus, the 240-residue chain is Probable transcriptional regulatory protein PBPRB1582 (240 aa).

Belongs to the TACO1 family.

The protein resides in the cytoplasm. In Photobacterium profundum (strain SS9), this protein is Probable transcriptional regulatory protein PBPRB1582.